We begin with the raw amino-acid sequence, 173 residues long: Zinc finger matrin-type protein 5 (173 aa).

The C3H1-type zinc finger occupies 51–79 (ERSKEVCRKFVQTGQCVFGTSCRFSHMSE). A disordered region spans residues 83-111 (KMLEQKIDDEKRQKEDPDQDGSSERSVDE).

In terms of assembly, component of the U11/U12 snRNPs that are part of the U12-type spliceosome.

It localises to the nucleus. This is Zinc finger matrin-type protein 5 (zmat5) from Danio rerio (Zebrafish).